Consider the following 395-residue polypeptide: GDP-mannose 4,6 dehydratase (395 aa).

2 stretches are compositionally biased toward polar residues: residues 1 to 13 (MLNT…STSD) and 24 to 36 (ESSS…QNGT). Residues 1–44 (MLNTRLIAMSTSDGAPETKKQRPESSSNGSKDQNGTEAGAEGDS) are disordered. NADP(+) is bound by residues 53 to 58 (GITGQD), 109 to 110 (DM), 131 to 135 (LAAQS), and Tyr-146. The active site involves Thr-178. Catalysis depends on nucleophile residues Glu-180 and Tyr-202. NADP(+)-binding residues include Lys-206, His-232, and Arg-237.

This sequence belongs to the NAD(P)-dependent epimerase/dehydratase family. GDP-mannose 4,6-dehydratase subfamily. The cofactor is NADP(+).

It catalyses the reaction GDP-alpha-D-mannose = GDP-4-dehydro-alpha-D-rhamnose + H2O. The protein operates within nucleotide-sugar biosynthesis; GDP-L-fucose biosynthesis via de novo pathway; GDP-L-fucose from GDP-alpha-D-mannose: step 1/2. Functionally, catalyzes the conversion of GDP-D-mannose to GDP-4-dehydro-6-deoxy-D-mannose (also known as GDP-4-keto-6-deoxy-D-mannose or GDP-4-dehydro-alpha-D-rhamnose), an essential step in the synthesis of GDP-fucose from GDP-mannose. This chain is GDP-mannose 4,6 dehydratase (Gmd), found in Drosophila melanogaster (Fruit fly).